Reading from the N-terminus, the 1117-residue chain is Cytospin-A (1117 aa).

Disordered regions lie at residues 1-176, 293-323, and 358-390; these read MKKA…NQIS, SLSP…GSVE, and SSDD…NASE. Composition is skewed to low complexity over residues 45–72 and 99–119; these read TTAS…TNGV and KIST…NKES. Composition is skewed to basic and acidic residues over residues 120-131 and 158-171; these read SSTRERLRERTR and TTTE…KSKS. Residues 168–280 are a coiled coil; the sequence is KSKSDNQISD…LNALGFSLEQ (113 aa). Positions 293-303 are enriched in polar residues; it reads SLSPEITPGNQ. Residues 358–377 are compositionally biased toward low complexity; it reads SSDDALDAPSSSESEGIPSI. Ser-384, Ser-385, and Ser-389 each carry phosphoserine. 2 coiled-coil regions span residues 394–449 and 487–807; these read ACLT…MESL and RYME…RGRV. The interval 852-878 is disordered; sequence SQVPNPTAAAIPRTPLSPSPMKTPPAA. Residues Ser-868, Ser-881, and Ser-887 each carry the phosphoserine modification. The interval 920 to 997 is disordered; the sequence is TSSTSRPASL…PTTRSRIREE (78 aa). The segment covering 946–956 has biased composition (basic and acidic residues); it reads RSSEEMKRDIS. The span at 971–990 shows a compositional bias: low complexity; the sequence is TTSPQLSLSSSPTASVTPTT. In terms of domain architecture, Calponin-homology (CH) spans 1011-1116; it reads GSKRNALLKW…YVTAIYKYFE (106 aa).

This sequence belongs to the cytospin-A family. As to quaternary structure, may interact with both microtubules and actin cytoskeleton.

It is found in the cytoplasm. The protein localises to the cytoskeleton. The protein resides in the spindle. Its subcellular location is the cell junction. It localises to the gap junction. In terms of biological role, involved in cytokinesis and spindle organization. May play a role in actin cytoskeleton organization and microtubule stabilization and hence required for proper cell adhesion and migration. The sequence is that of Cytospin-A (SPECC1L) from Canis lupus familiaris (Dog).